The sequence spans 214 residues: Thiopurine S-methyltransferase (214 aa).

Positions 10, 44, 65, and 122 each coordinate S-adenosyl-L-methionine.

It belongs to the class I-like SAM-binding methyltransferase superfamily. TPMT family.

The protein resides in the cytoplasm. It carries out the reaction S-adenosyl-L-methionine + a thiopurine = S-adenosyl-L-homocysteine + a thiopurine S-methylether.. This chain is Thiopurine S-methyltransferase, found in Teredinibacter turnerae (strain ATCC 39867 / T7901).